The sequence spans 563 residues: Ataxin-10 homolog (563 aa).

At T433 the chain carries Phosphothreonine. A disordered region spans residues 544 to 563 (VSKEEDPGNENSEIISIDED). S559 carries the phosphoserine modification.

It belongs to the ataxin-10 family.

The protein resides in the cytoplasm. Its function is as follows. May play a role in the regulation of cytokinesis. The polypeptide is Ataxin-10 homolog (CTR86) (Saccharomyces cerevisiae (strain ATCC 204508 / S288c) (Baker's yeast)).